A 390-amino-acid chain; its full sequence is Na(+)/H(+) antiporter NhaA (390 aa).

A run of 11 helical transmembrane segments spans residues 13–33 (FQLE…ALVI), 61–81 (LSVH…FVTL), 99–119 (LLPI…YVFI), 129–149 (GWAI…SLLG), 158–178 (VFLT…IAFF), 181–201 (GDLS…LLTL), 209–229 (FIPY…SGIH), 259–279 (AISP…NAGV), 297–317 (ILLG…FIAV), 330–350 (WLSL…SLFV), and 367–387 (IGVL…LLYA).

It belongs to the NhaA Na(+)/H(+) (TC 2.A.33) antiporter family.

Its subcellular location is the cell inner membrane. It carries out the reaction Na(+)(in) + 2 H(+)(out) = Na(+)(out) + 2 H(+)(in). In terms of biological role, na(+)/H(+) antiporter that extrudes sodium in exchange for external protons. The polypeptide is Na(+)/H(+) antiporter NhaA (Pelagibacter ubique (strain HTCC1062)).